We begin with the raw amino-acid sequence, 379 residues long: Protein trichome birefringence-like 36 (379 aa).

The chain crosses the membrane as a helical; Signal-anchor for type II membrane protein span at residues 8-24 (VLFLSLCLILGKVVLSQ). The short motif at 123–125 (GDS) is the GDS motif element. A DCXHWCLPGXXDXWN motif motif is present at residues 353 to 367 (DCSHWCLPGVPDIWN).

Belongs to the PC-esterase family. TBL subfamily.

It is found in the membrane. Its function is as follows. May act as a bridging protein that binds pectin and other cell wall polysaccharides. Probably involved in maintaining esterification of pectins. May be involved in the specific O-acetylation of cell wall polymers. The polypeptide is Protein trichome birefringence-like 36 (TBL36) (Arabidopsis thaliana (Mouse-ear cress)).